The chain runs to 328 residues: Nicotianamine synthase 1 (328 aa).

The protein belongs to the nicotianamine synthase (NAS)-like family. As to expression, in roots but not in leaves.

It catalyses the reaction 3 S-adenosyl-L-methionine = nicotianamine + 3 S-methyl-5'-thioadenosine + 3 H(+). Functionally, synthesizes nicotianamine, a polyamine that is the first intermediate in the synthesis of the phytosiderophores of the mugineic acid type found in gramineae which serves as a sensor for the physiological iron status within the plant, and/or might be involved in the transport of iron. The protein is Nicotianamine synthase 1 (NAS1) of Hordeum vulgare (Barley).